A 218-amino-acid polypeptide reads, in one-letter code: MTQDELKKAVGWAALEYVKPGTIVGVGTGSTASHFIDALATMKGQIEGAVSSSEASTAKLKSYGIPVFDCNEVDSLDIYVDGADEINHQMQMIKGGGAALTREKIIAAVAKTFVCIVDESKQVDVLGKFPLPVEVIPMARSYVARELVKLGGLPEYRENVVTDNGNVILDVYNLTILNPIELENKINSIAGVVTVGLFANRGADIVLMGTSEGVKTIK.

Substrate is bound by residues 28–31 (TGST), 81–84 (DGAD), and 94–97 (KGGG). The active-site Proton acceptor is the E103. K121 contacts substrate.

Belongs to the ribose 5-phosphate isomerase family. In terms of assembly, homodimer.

It catalyses the reaction aldehydo-D-ribose 5-phosphate = D-ribulose 5-phosphate. The protein operates within carbohydrate degradation; pentose phosphate pathway; D-ribose 5-phosphate from D-ribulose 5-phosphate (non-oxidative stage): step 1/1. In terms of biological role, catalyzes the reversible conversion of ribose-5-phosphate to ribulose 5-phosphate. This is Ribose-5-phosphate isomerase A from Proteus mirabilis (strain HI4320).